The sequence spans 196 residues: Adenylate kinase (196 aa).

9 to 17 (GIPGVGKST) contacts ATP.

It belongs to the archaeal adenylate kinase family.

It localises to the cytoplasm. The enzyme catalyses AMP + ATP = 2 ADP. This Thermococcus onnurineus (strain NA1) protein is Adenylate kinase.